A 711-amino-acid chain; its full sequence is Polyribonucleotide nucleotidyltransferase (711 aa).

Mg(2+)-binding residues include Asp490 and Asp496. In terms of domain architecture, KH spans 557–616; sequence PRIETMQIPTDKIREVIGSGGKVIREIVETSGAKVDINDDGIIKIASANGEAIKKAYEMI. One can recognise an S1 motif domain in the interval 626–694; it reads GKVYTGTVVK…DRGKVRLSMK (69 aa).

This sequence belongs to the polyribonucleotide nucleotidyltransferase family. The cofactor is Mg(2+).

The protein resides in the cytoplasm. It catalyses the reaction RNA(n+1) + phosphate = RNA(n) + a ribonucleoside 5'-diphosphate. Functionally, involved in mRNA degradation. Catalyzes the phosphorolysis of single-stranded polyribonucleotides processively in the 3'- to 5'-direction. This Dinoroseobacter shibae (strain DSM 16493 / NCIMB 14021 / DFL 12) protein is Polyribonucleotide nucleotidyltransferase.